Consider the following 425-residue polypeptide: Pleckstrin homology domain-containing family A member 2 (425 aa).

The 107-residue stretch at Q7–K113 folds into the PH 1 domain. K141 is covalently cross-linked (Glycyl lysine isopeptide (Lys-Gly) (interchain with G-Cter in SUMO2)). S184 is modified (phosphoserine). The PH 2 domain occupies P198–Q298. The segment covering S312–I330 has biased composition (low complexity). The interval S312–C332 is disordered. S314 and S349 each carry phosphoserine. The interval S352–V425 is disordered. Basic and acidic residues predominate over residues R400–P410.

In terms of assembly, binds MPDZ and PTPN13. In terms of tissue distribution, highly expressed in heart, kidney, spleen and peripheral blood leukocytes. Detected at lower levels in brain, skeletal muscle, colon, thymus, liver, small intestine, placenta and lung.

It is found in the cytoplasm. It localises to the cell membrane. Its subcellular location is the nucleus. Binds specifically to phosphatidylinositol 3,4-diphosphate (PtdIns3,4P2), but not to other phosphoinositides. May recruit other proteins to the plasma membrane. This chain is Pleckstrin homology domain-containing family A member 2 (PLEKHA2), found in Homo sapiens (Human).